A 62-amino-acid chain; its full sequence is Photosystem II reaction center protein Z (62 aa).

Helical transmembrane passes span 8–28 and 41–61; these read AVFALIAISFLLVIGVPVVLA and FSGASLWIGLVFLVGILNSFI.

It belongs to the PsbZ family. As to quaternary structure, PSII is composed of 1 copy each of membrane proteins PsbA, PsbB, PsbC, PsbD, PsbE, PsbF, PsbH, PsbI, PsbJ, PsbK, PsbL, PsbM, PsbT, PsbY, PsbZ, Psb30/Ycf12, at least 3 peripheral proteins of the oxygen-evolving complex and a large number of cofactors. It forms dimeric complexes.

The protein resides in the plastid. Its subcellular location is the chloroplast thylakoid membrane. Functionally, may control the interaction of photosystem II (PSII) cores with the light-harvesting antenna, regulates electron flow through the 2 photosystem reaction centers. PSII is a light-driven water plastoquinone oxidoreductase, using light energy to abstract electrons from H(2)O, generating a proton gradient subsequently used for ATP formation. In Marchantia polymorpha (Common liverwort), this protein is Photosystem II reaction center protein Z.